The following is a 553-amino-acid chain: Putative transport protein YidE (553 aa).

5 helical membrane-spanning segments follow: residues 4 to 24, 28 to 48, 65 to 85, 95 to 115, and 158 to 178; these read IALT…IGNI, GVGF…HFVD, FGLI…FFAS, LFAV…HKIF, and MSYA…MWLM. 2 RCK C-terminal domains span residues 192-276 and 279-361; these read KHES…VIGK and DTSL…VVGN. 5 helical membrane passes run 371–391, 403–425, 437–457, 464–484, and 533–553; these read MLPV…PLFV, AGGP…LYWF, LGIV…FVNT, LSWI…VGLL, and LVMF…WGIG.

Belongs to the AAE transporter (TC 2.A.81) family. YidE subfamily.

The protein localises to the cell membrane. In Salmonella arizonae (strain ATCC BAA-731 / CDC346-86 / RSK2980), this protein is Putative transport protein YidE.